We begin with the raw amino-acid sequence, 469 residues long: Equisetin cluster transcription factor eqxR (469 aa).

Residues 13–47 (CDRCRSHKLKCTVAPENSRSGSNRCTRCIRAQVTC) constitute a DNA-binding region (zn(2)-C6 fungal-type). Positions 58 to 84 (STNVKKADIKSGTNSQETTSMQASTIV) are disordered. Residues 68 to 82 (SGTNSQETTSMQAST) show a composition bias toward polar residues.

Its subcellular location is the nucleus. In terms of biological role, transcription factor that regulates the expression of the gene cluster that mediates the biosynthesis of Equisetin. The polypeptide is Equisetin cluster transcription factor eqxR (Fusarium heterosporum).